Consider the following 105-residue polypeptide: uncharacterized protein (105 aa).

The next 2 helical transmembrane spans lie at 10 to 30 (YVVFIISLIVLLIIFYVFKIG) and 48 to 68 (YPLAISLVIWVIWYFLLYPPS).

The protein localises to the membrane. This is an uncharacterized protein from Acanthamoeba polyphaga mimivirus (APMV).